The sequence spans 308 residues: Oligopeptide transport ATP-binding protein AmiF (308 aa).

An ABC transporter domain is found at 6–251 (VEIKDLEISF…PIHPYTQALL (246 aa)). 42–49 (GESGSGKT) contributes to the ATP binding site.

This sequence belongs to the ABC transporter superfamily.

Its subcellular location is the cell membrane. Part of the binding-protein-dependent transport system for oligopeptides. Probably responsible for energy coupling to the transport system. This chain is Oligopeptide transport ATP-binding protein AmiF (amiF), found in Streptococcus pneumoniae serotype 4 (strain ATCC BAA-334 / TIGR4).